We begin with the raw amino-acid sequence, 433 residues long: Glutamate-1-semialdehyde 2,1-aminomutase (433 aa).

At Lys270 the chain carries N6-(pyridoxal phosphate)lysine.

Belongs to the class-III pyridoxal-phosphate-dependent aminotransferase family. HemL subfamily. As to quaternary structure, homodimer. Pyridoxal 5'-phosphate serves as cofactor.

It is found in the cytoplasm. It carries out the reaction (S)-4-amino-5-oxopentanoate = 5-aminolevulinate. The protein operates within porphyrin-containing compound metabolism; protoporphyrin-IX biosynthesis; 5-aminolevulinate from L-glutamyl-tRNA(Glu): step 2/2. This Clostridium novyi (strain NT) protein is Glutamate-1-semialdehyde 2,1-aminomutase.